A 503-amino-acid chain; its full sequence is Na(+)-translocating NADH-quinone reductase subunit B (503 aa).

A run of 5 helical transmembrane segments spans residues 55–75 (MMLV…NSGL), 85–105 (PQIM…SFVS), 120–142 (IFLP…FAII), 161–181 (ILPP…GVVI), and 186–206 (FGGT…FLFF). The residue at position 248 (Thr-248) is an FMN phosphoryl threonine. A run of 5 helical transmembrane segments spans residues 361 to 381 (TSTV…IASW), 387 to 407 (FGLS…LAAG), 417 to 437 (FFIP…LVFM), 452 to 472 (WFYG…NPAY), and 475 to 495 (GVML…RIAL).

This sequence belongs to the NqrB/RnfD family. In terms of assembly, composed of six subunits; NqrA, NqrB, NqrC, NqrD, NqrE and NqrF. FMN is required as a cofactor.

The protein resides in the cell inner membrane. It carries out the reaction a ubiquinone + n Na(+)(in) + NADH + H(+) = a ubiquinol + n Na(+)(out) + NAD(+). Its function is as follows. NQR complex catalyzes the reduction of ubiquinone-1 to ubiquinol by two successive reactions, coupled with the transport of Na(+) ions from the cytoplasm to the periplasm. NqrA to NqrE are probably involved in the second step, the conversion of ubisemiquinone to ubiquinol. In Chlamydia muridarum (strain MoPn / Nigg), this protein is Na(+)-translocating NADH-quinone reductase subunit B.